The sequence spans 428 residues: MNIAVVGLSHKTAPVEVREKLSIQEAKLEEALTHLRGYPHIEEVAIISTCNRLEIYAVVSDTEKGVVEITQFLSETGHLPLNYLRRYLFTLLHQDAVRHLLRVAAGLESLVLGEGQILAQVKTTHKLGQKYKGIGRLLDRLFKQAITAGKRVRSETNIGTGAVSISSAAVELAQTKAEDLANRRISIIGAGKMARLLVQHLLSKGATDITIVNRSHHRAQELAAQFPQASLNLQLLPEMMQVVASSHIVFTSTAATEPILHRENLTAALDPNHALMLFDISVPRNVASDVHGMEGIESYNVDDLKAVVAQNYESRRQMAQEAEGLLEEEVEAFDLWWRSLETVPTISCLRTKVETIREQELEKALSRLGTEFAEKHQEVIEALTRGIVNKILHEPMVQLRAQQDIEARKRCLESLKMLFDLEIEEQFG.

Substrate contacts are provided by residues 49–52 (TCNR), Ser-109, 114–116 (EGQ), and Gln-120. Cys-50 serves as the catalytic Nucleophile. 189–194 (GAGKMA) is an NADP(+) binding site.

Belongs to the glutamyl-tRNA reductase family. As to quaternary structure, homodimer.

The enzyme catalyses (S)-4-amino-5-oxopentanoate + tRNA(Glu) + NADP(+) = L-glutamyl-tRNA(Glu) + NADPH + H(+). Its pathway is porphyrin-containing compound metabolism; protoporphyrin-IX biosynthesis; 5-aminolevulinate from L-glutamyl-tRNA(Glu): step 1/2. It participates in porphyrin-containing compound metabolism; chlorophyll biosynthesis. In terms of biological role, catalyzes the NADPH-dependent reduction of glutamyl-tRNA(Glu) to glutamate 1-semialdehyde (GSA). In Rippkaea orientalis (strain PCC 8801 / RF-1) (Cyanothece sp. (strain PCC 8801)), this protein is Glutamyl-tRNA reductase.